We begin with the raw amino-acid sequence, 118 residues long: Putative pterin-4-alpha-carbinolamine dehydratase (118 aa).

It belongs to the pterin-4-alpha-carbinolamine dehydratase family.

The catalysed reaction is (4aS,6R)-4a-hydroxy-L-erythro-5,6,7,8-tetrahydrobiopterin = (6R)-L-erythro-6,7-dihydrobiopterin + H2O. In Pseudomonas putida (strain ATCC 700007 / DSM 6899 / JCM 31910 / BCRC 17059 / LMG 24140 / F1), this protein is Putative pterin-4-alpha-carbinolamine dehydratase.